A 351-amino-acid polypeptide reads, in one-letter code: Probable minor fimbrial subunit LpfD (351 aa).

The N-terminal stretch at 1–22 is a signal peptide; sequence MKAAIALSLLGCVFGFSGKAFA.

Belongs to the fimbrial protein family.

Its subcellular location is the fimbrium. Part of the lpfABCC'DE fimbrial operon. LP fimbriae may participate in the interaction with eukaryotic cells by assisting in microcolony formation. This chain is Probable minor fimbrial subunit LpfD (lpfD), found in Escherichia coli O157:H7.